We begin with the raw amino-acid sequence, 151 residues long: MRALIQRVKHASVSVDGHDVGAIEHGVLAYIGLGHDDNLQSAQRMVDKILTYRIFENDDDPAKYGKLDKNVQQVDGGLLLVSQFTLMAKTDKGRRPDFGGAMAPDAAQDLFAQLIAYAKTQHVDVATGQFGADMQVLSVNDGPLNFLLEVP.

The Gly-cisPro motif, important for rejection of L-amino acids motif lies at 142-143 (GP).

The protein belongs to the DTD family. As to quaternary structure, homodimer.

It localises to the cytoplasm. It carries out the reaction glycyl-tRNA(Ala) + H2O = tRNA(Ala) + glycine + H(+). The enzyme catalyses a D-aminoacyl-tRNA + H2O = a tRNA + a D-alpha-amino acid + H(+). In terms of biological role, an aminoacyl-tRNA editing enzyme that deacylates mischarged D-aminoacyl-tRNAs. Also deacylates mischarged glycyl-tRNA(Ala), protecting cells against glycine mischarging by AlaRS. Acts via tRNA-based rather than protein-based catalysis; rejects L-amino acids rather than detecting D-amino acids in the active site. By recycling D-aminoacyl-tRNA to D-amino acids and free tRNA molecules, this enzyme counteracts the toxicity associated with the formation of D-aminoacyl-tRNA entities in vivo and helps enforce protein L-homochirality. This chain is D-aminoacyl-tRNA deacylase, found in Psychrobacter arcticus (strain DSM 17307 / VKM B-2377 / 273-4).